A 432-amino-acid polypeptide reads, in one-letter code: GTPase Obg (432 aa).

The Obg domain maps to 1-158 (MFVDQIKIEV…RKLKLELKVL (158 aa)). Residues 159–335 (ADVGLVGFPS…LTHRTADVLE (177 aa)) enclose the OBG-type G domain. Residues 165–172 (GFPSVGKS), 190–194 (FTTLV), 212–215 (DLPG), 282–285 (SKMD), and 316–318 (SSL) each bind GTP. Residues Ser172 and Thr192 each contribute to the Mg(2+) site. The OCT domain occupies 354–432 (TFKEDEPAFK…IEDFTFEFVE (79 aa)).

It belongs to the TRAFAC class OBG-HflX-like GTPase superfamily. OBG GTPase family. As to quaternary structure, monomer. It depends on Mg(2+) as a cofactor.

The protein resides in the cytoplasm. In terms of biological role, an essential GTPase which binds GTP, GDP and possibly (p)ppGpp with moderate affinity, with high nucleotide exchange rates and a fairly low GTP hydrolysis rate. Plays a role in control of the cell cycle, stress response, ribosome biogenesis and in those bacteria that undergo differentiation, in morphogenesis control. The sequence is that of GTPase Obg from Ligilactobacillus salivarius (strain UCC118) (Lactobacillus salivarius).